The sequence spans 321 residues: Glucokinase (321 aa).

8-13 (GDVGGT) is an ATP binding site.

The protein belongs to the bacterial glucokinase family.

It localises to the cytoplasm. It carries out the reaction D-glucose + ATP = D-glucose 6-phosphate + ADP + H(+). The polypeptide is Glucokinase (Citrobacter koseri (strain ATCC BAA-895 / CDC 4225-83 / SGSC4696)).